Here is an 808-residue protein sequence, read N- to C-terminus: Probable potassium transporter 3 (808 aa).

At 1–34 (MPVADCESGLSPADVTGAGAANGNPGHWRSYYRH) the chain is on the cytoplasmic side. The chain crosses the membrane as a helical span at residues 35–55 (VLLLAYQSCGVVYGDLSTSPL). The Extracellular segment spans residues 56–81 (YVYKSTFIIGSLRRFQDEEIVFGVFS). A helical membrane pass occupies residues 82-102 (LVFWTLTLIPLLKYVFIVLAA). Residues 103 to 167 (DDNGEGGTFA…FLENHRKSRT (65 aa)) are Cytoplasmic-facing. The chain crosses the membrane as a helical span at residues 168-188 (FLLVTVLFGASLVIGDGVLTP). Topologically, residues 189–204 (PMSVLSSFSGLQVHST) are extracellular. Residues 205–225 (ALTSGEVEILSCTVLVCLFMV) traverse the membrane as a helical segment. Topologically, residues 226–232 (QHWGTHR) are cytoplasmic. The helical transmembrane segment at 233-253 (VAFLFAPVVIVWLLLLGALGV) threads the bilayer. The Extracellular segment spans residues 254–283 (YNIVVWNPRVLRALSPYYLVRFFQHTGKDG). A helical membrane pass occupies residues 284–304 (WISLGGILLSMTGTEAMYADL). At 305 to 313 (GHFTAASIR) the chain is on the cytoplasmic side. A helical transmembrane segment spans residues 314 to 334 (VAFVGLIYPCLVLQYMGQAAF). The Extracellular portion of the chain corresponds to 335–354 (LSKSPHCDIHFVFFESIPTG). A helical transmembrane segment spans residues 355-375 (IFWPVLVIATLAAIVGSQAVI). Residues 376–406 (SATFSIVRQCTALGCFPRVKIVHTSRRIHGQ) lie on the Cytoplasmic side of the membrane. Residues 407–427 (IYSPEINWILMLLCIAVTMGL) form a helical membrane-spanning segment. Residues 428–439 (RDTTLIGNAYGM) lie on the Extracellular side of the membrane. Residues 440-460 (ACAGVMLVTTLLMALVIVFVW) traverse the membrane as a helical segment. The Cytoplasmic portion of the chain corresponds to 461–464 (QYSC). The chain crosses the membrane as a helical span at residues 465-485 (LVAALFLVAFGVVEAVYLSAA). Topologically, residues 486–491 (LMKVPQ) are extracellular. The helical transmembrane segment at 492–512 (GGWLPLVLSLVFVAVMYVWHY) threads the bilayer. Over 513–808 (GTRRKHQFDV…LIEVGMIYYV (296 aa)) the chain is Cytoplasmic.

It belongs to the HAK/KUP transporter (TC 2.A.72.3) family.

It is found in the membrane. High-affinity potassium transporter. This is Probable potassium transporter 3 (HAK3) from Oryza sativa subsp. japonica (Rice).